A 721-amino-acid chain; its full sequence is Polyribonucleotide nucleotidyltransferase (721 aa).

D511 and D517 together coordinate Mg(2+). A KH domain is found at 577 to 637 (PSTDFFHINP…SGVQAAREHI (61 aa)). Positions 654 to 721 (GDIHKGIVKK…KGNKISLGIA (68 aa)) constitute an S1 motif domain.

The protein belongs to the polyribonucleotide nucleotidyltransferase family. It depends on Mg(2+) as a cofactor.

The protein localises to the cytoplasm. The enzyme catalyses RNA(n+1) + phosphate = RNA(n) + a ribonucleoside 5'-diphosphate. Its function is as follows. Involved in mRNA degradation. Catalyzes the phosphorolysis of single-stranded polyribonucleotides processively in the 3'- to 5'-direction. This is Polyribonucleotide nucleotidyltransferase from Sulfurimonas denitrificans (strain ATCC 33889 / DSM 1251) (Thiomicrospira denitrificans (strain ATCC 33889 / DSM 1251)).